Consider the following 242-residue polypeptide: Carboxy-S-adenosyl-L-methionine synthase (242 aa).

S-adenosyl-L-methionine-binding positions include tyrosine 39, 64–66, 89–90, 117–118, asparagine 132, and arginine 199; these read GCS, DN, and DI.

It belongs to the class I-like SAM-binding methyltransferase superfamily. Cx-SAM synthase family. Homodimer.

It catalyses the reaction prephenate + S-adenosyl-L-methionine = carboxy-S-adenosyl-L-methionine + 3-phenylpyruvate + H2O. Catalyzes the conversion of S-adenosyl-L-methionine (SAM) to carboxy-S-adenosyl-L-methionine (Cx-SAM). In Aliivibrio fischeri (strain ATCC 700601 / ES114) (Vibrio fischeri), this protein is Carboxy-S-adenosyl-L-methionine synthase.